The following is a 147-amino-acid chain: Large ribosomal subunit protein uL15 (147 aa).

Positions 1–15 (MKLHELKPAKGAVKE) are enriched in basic and acidic residues. The tract at residues 1 to 47 (MKLHELKPAKGAVKEVKRKGRGRATGNGKTAGRGHNGQNSRSGGGVR) is disordered. The span at 23 to 35 (RATGNGKTAGRGH) shows a compositional bias: gly residues.

It belongs to the universal ribosomal protein uL15 family. Part of the 50S ribosomal subunit.

Binds to the 23S rRNA. The protein is Large ribosomal subunit protein uL15 of Alkaliphilus metalliredigens (strain QYMF).